Reading from the N-terminus, the 2226-residue chain is DNA polymerase epsilon catalytic subunit A (2226 aa).

The segment at 1240 to 1265 is disordered; that stretch reads RVSKVTSRKRRNGKANNVSDSEEEER. C2112, C2115, C2134, and C2137 together coordinate Zn(2+). The CysA-type zinc finger occupies 2112-2137; sequence CDYCNYIRDIDFCRDEQKNIWNCSNC. [4Fe-4S] cluster-binding residues include C2168, C2171, C2183, and C2185. Positions 2168-2185 match the CysB motif motif; the sequence is CSKCHQIKSDNMSEYCKC.

The protein belongs to the DNA polymerase type-B family. In terms of assembly, heterotetramer. Consists of 4 subunits: POL2, DPB2, DPB3 and DPB4. [4Fe-4S] cluster is required as a cofactor.

It is found in the nucleus. The catalysed reaction is DNA(n) + a 2'-deoxyribonucleoside 5'-triphosphate = DNA(n+1) + diphosphate. Its function is as follows. DNA polymerase II participates in chromosomal DNA replication. The sequence is that of DNA polymerase epsilon catalytic subunit A (POL2) from Debaryomyces hansenii (strain ATCC 36239 / CBS 767 / BCRC 21394 / JCM 1990 / NBRC 0083 / IGC 2968) (Yeast).